The sequence spans 688 residues: Glycine--tRNA ligase beta subunit (688 aa).

The protein belongs to the class-II aminoacyl-tRNA synthetase family. Tetramer of two alpha and two beta subunits.

The protein localises to the cytoplasm. The enzyme catalyses tRNA(Gly) + glycine + ATP = glycyl-tRNA(Gly) + AMP + diphosphate. The chain is Glycine--tRNA ligase beta subunit from Vibrio parahaemolyticus serotype O3:K6 (strain RIMD 2210633).